A 326-amino-acid chain; its full sequence is Phospholipid scramblase 4 (326 aa).

The segment at 1–32 (MSGLVPTAPEQPTEEMENQIKSPTAVPDAPPD) is disordered. Positions 1–94 (MSGLVPTAPE…PVTNQPAPIM (94 aa)) are proline-rich domain (PRD). The Cytoplasmic segment spans residues 1-299 (MSGLVPTAPE…IRFPLALDVK (299 aa)). The short motif at 18–25 (NQIKSPTA) is the SH3-binding 1 element. Residues 30–33 (PPDY) carry the PPxY motif motif. An SH3-binding 2 motif is present at residues 41 to 49 (PAGPVASPS). Phosphotyrosine; by ABL occurs at positions 79 and 84. Residues 94-102 (MWMAGPAPV) carry the SH3-binding 3 motif. Residues Cys-193, Cys-194, Cys-195, Cys-197, and Cys-198 are each lipidated (S-palmitoyl cysteine). A helical membrane pass occupies residues 300–316 (MKAMIFGSCFLIDFMYF). Residues 317–326 (ERPPPRRMSR) are Extracellular-facing.

This sequence belongs to the phospholipid scramblase family. Interacts with PDCD6. Interacts with KPNA2; this interaction mediates the nucleus import of PLSCR4. It depends on Ca(2+) as a cofactor. Mg(2+) is required as a cofactor. Requires Zn(2+) as cofactor.

Its subcellular location is the cell membrane. The protein localises to the nucleus. It carries out the reaction a 1,2-diacyl-sn-glycero-3-phosphocholine(in) = a 1,2-diacyl-sn-glycero-3-phosphocholine(out). The enzyme catalyses a 1,2-diacyl-sn-glycero-3-phospho-L-serine(in) = a 1,2-diacyl-sn-glycero-3-phospho-L-serine(out). Functionally, catalyzes metal ion-induced ATP-independent rapid bidirectional and non-specific movement of phospholipids (lipid scrambling or lipid flip-flop) between the inner and outer leaflet of the plasma membrane and participates in the redistribution of phospholipids between membrane leaflets. Metal ions bind to the calcium-binding site and induce conformation change in the protein. Has a greater affi nity for Ca(2+) than Mg(2+) and Zn(2+). The sequence is that of Phospholipid scramblase 4 from Mus musculus (Mouse).